Here is a 446-residue protein sequence, read N- to C-terminus: Tubulin beta-1 chain (446 aa).

GTP is bound by residues Gln-13, Glu-71, Ser-140, Gly-144, Thr-145, Gly-146, Asn-206, and Asn-228. Glu-71 is a binding site for Mg(2+). The segment at 421-446 (VSEYQQYQDASADDGEEYEEDAPMEE) is disordered. The span at 431-446 (SADDGEEYEEDAPMEE) shows a compositional bias: acidic residues.

The protein belongs to the tubulin family. As to quaternary structure, dimer of alpha and beta chains. A typical microtubule is a hollow water-filled tube with an outer diameter of 25 nm and an inner diameter of 15 nM. Alpha-beta heterodimers associate head-to-tail to form protofilaments running lengthwise along the microtubule wall with the beta-tubulin subunit facing the microtubule plus end conferring a structural polarity. Microtubules usually have 13 protofilaments but different protofilament numbers can be found in some organisms and specialized cells. Requires Mg(2+) as cofactor.

Its subcellular location is the cytoplasm. The protein resides in the cytoskeleton. In terms of biological role, tubulin is the major constituent of microtubules, a cylinder consisting of laterally associated linear protofilaments composed of alpha- and beta-tubulin heterodimers. Microtubules grow by the addition of GTP-tubulin dimers to the microtubule end, where a stabilizing cap forms. Below the cap, tubulin dimers are in GDP-bound state, owing to GTPase activity of alpha-tubulin. This is Tubulin beta-1 chain (tub1) from Hypocrea rufa (Trichoderma viride).